A 255-amino-acid chain; its full sequence is uncharacterized protein (255 aa).

In terms of domain architecture, J spans 4–72 (DPYSVLGVEK…KRRKHYDKTG (69 aa)). Composition is skewed to basic residues over residues 167–178 (FAPNEKKRKRRA) and 243–255 (TKPKKSKKSRSKE). Disordered stretches follow at residues 167 to 215 (FAPN…EEAL) and 230 to 255 (LISNLESKYSKSSTKPKKSKKSRSKE).

This sequence belongs to the DnaJ family.

Its subcellular location is the nucleus. It is found in the nucleolus. This is an uncharacterized protein from Schizosaccharomyces pombe (strain 972 / ATCC 24843) (Fission yeast).